The chain runs to 153 residues: MVAKAVCVINGDAKGTVYFEQEDACAPVKVCGEITGLNKGQHGFHVHEFGDNTNGCMSSGPHFNPLNKEHGAPTDENRHLGDLGNIEAPGDGPTKVCINDSKITLFGENSIVGRTVVVHADPDDLGKGGHELSKSTGNAGARIGCGVIGICKI.

Cu cation-binding residues include H45, H47, and H62. C56 and C145 are disulfide-bonded. Zn(2+) is bound by residues H62, H70, H79, and D82. Residue H119 participates in Cu cation binding.

This sequence belongs to the Cu-Zn superoxide dismutase family. In terms of assembly, homodimer. It depends on Cu cation as a cofactor. Zn(2+) is required as a cofactor.

The protein resides in the cytoplasm. The catalysed reaction is 2 superoxide + 2 H(+) = H2O2 + O2. In terms of biological role, destroys radicals which are normally produced within the cells and which are toxic to biological systems. The sequence is that of Superoxide dismutase [Cu-Zn] (Sod) from Chymomyza amoena.